We begin with the raw amino-acid sequence, 192 residues long: Cytochrome b-245 light chain (192 aa).

Residues 2-7 (GQIEWA) lie on the Cytoplasmic side of the membrane. The helical transmembrane segment at 8–30 (MWANEQALASGLILITGGIVATA) threads the bilayer. Residues 31–35 (GQFAQ) lie on the Extracellular side of the membrane. The helical transmembrane segment at 36–53 (WYLGAYSIAAGVLICLLE) threads the bilayer. Topologically, residues 54-69 (YPRGKRSKGSTMERCG) are cytoplasmic. An intramembrane segment occupies 70-80 (QKYLTRAVKVF). The Cytoplasmic segment spans residues 81–86 (GPLTSN). A helical transmembrane segment spans residues 87 to 104 (YYIRAFLHLGLSVPAGFL). Position 105 (Leu105) is a topological domain, extracellular. A helical transmembrane segment spans residues 106 to 126 (ATILGTACLAIASSIYLLAAI). Residues 127–192 (HGEHWTPIET…NPMPVTDEVV (66 aa)) lie on the Cytoplasmic side of the membrane. The tract at residues 134–192 (IETKPKERPQVGGTIKQPPSNPPPRPPAEARKKPSEEEVAGVPGGGPQENPMPVTDEVV) is disordered. Thr147 carries the post-translational modification Phosphothreonine. A Glycyl lysine isopeptide (Lys-Gly) (interchain with G-Cter in ubiquitin) cross-link involves residue Lys149. Ser168 is modified (phosphoserine).

It belongs to the p22phox family. In terms of assembly, component of the phagocyte NADPH oxidase core complex/cytochrome b558 complex, composed of CYBB (heavy chain (beta)) and CYBA (light chain (alpha)). Component of the phagocyte NADPH oxidase complex composed of an obligatory core heterodimer formed by the membrane proteins CYBA and CYBB and the cytosolic regulatory subunits NCF1/p47-phox, NCF2/p67-phox, NCF4/p40-phox and the small GTPase RAC1 or RAC2. Interacts with NCF1 (via SH3 domain). Interacts with SH3PXD2A. Interacts with DUOX1, DUOX2 and TPO. Interacts with NOX4; this interaction mediates superoxide generation. Interacts with calprotectin (S100A8/9). Interacts with GBP7. Interacts with NOXO1. Forms a heterodimer with NOX3 and is essential for activity and cell membrane localization of NOX3. Interacts with NOX1. Phosphorylation at Thr-147 enhances NADPH oxidase activity by promoting NCF1/p47-phox binding. Post-translationally, ubiquitinated at Lys-149 likely by RNF145.

The protein localises to the cell membrane. Functionally, subunit of NADPH oxidase complexes that is required for the NADPH oxidase activity that generates, in various cell types, superoxide from molecular oxygen utilizing NADPH as an electron donor. Subunit of the phagocyte NADPH oxidase complex that mediates the transfer of electrons from cytosolic NADPH to O2 to produce the superoxide anion (O2(-)). In the activated complex, electrons are first transferred from NADPH to flavin adenine dinucleotide (FAD) and subsequently transferred via two heme molecules to molecular oxygen, producing superoxide through an outer-sphere reaction. Activation of the NADPH oxidase complex is initiated by the assembly of cytosolic subunits of the NADPH oxidase complex with the core NADPH oxidase complex to form a complex at the plasma membrane or phagosomal membrane. This activation process is initiated by phosphorylation dependent binding of the cytosolic NCF1/p47-phox subunit to the C-terminus of CYBA/p22-phox. Aassociates with NOX3 to form a functional NADPH oxidase constitutively generating superoxide. The chain is Cytochrome b-245 light chain from Tursiops truncatus (Atlantic bottle-nosed dolphin).